The chain runs to 186 residues: Secreted chorismate mutase (186 aa).

A signal peptide spans 1–30 (MQPTHTLTRLTVIGKLIIASSFFLSLAVQA). Residues 31–107 (QQCGQTAPLI…AAKAIQYRYR (77 aa)) enclose the Chorismate mutase domain. A disulfide bond links Cys33 and Cys148. Substrate contacts are provided by residues Arg43, Lys54, Asp63, 99 to 103 (AKAIQ), and Arg127.

Homodimer.

It localises to the periplasm. The catalysed reaction is chorismate = prephenate. It functions in the pathway metabolic intermediate biosynthesis; prephenate biosynthesis; prephenate from chorismate: step 1/1. Functionally, catalyzes the Claisen rearrangement of chorismate to prephenate. May play some role in the pathogenicity. This Yersinia pestis protein is Secreted chorismate mutase (pheA2).